The sequence spans 159 residues: SsrA-binding protein (159 aa).

Positions 140-150 are enriched in basic and acidic residues; it reads RATEKERDWNR. Positions 140–159 are disordered; that stretch reads RATEKERDWNRQKQRVLRQR.

It belongs to the SmpB family.

The protein resides in the cytoplasm. Required for rescue of stalled ribosomes mediated by trans-translation. Binds to transfer-messenger RNA (tmRNA), required for stable association of tmRNA with ribosomes. tmRNA and SmpB together mimic tRNA shape, replacing the anticodon stem-loop with SmpB. tmRNA is encoded by the ssrA gene; the 2 termini fold to resemble tRNA(Ala) and it encodes a 'tag peptide', a short internal open reading frame. During trans-translation Ala-aminoacylated tmRNA acts like a tRNA, entering the A-site of stalled ribosomes, displacing the stalled mRNA. The ribosome then switches to translate the ORF on the tmRNA; the nascent peptide is terminated with the 'tag peptide' encoded by the tmRNA and targeted for degradation. The ribosome is freed to recommence translation, which seems to be the essential function of trans-translation. The sequence is that of SsrA-binding protein from Alcanivorax borkumensis (strain ATCC 700651 / DSM 11573 / NCIMB 13689 / SK2).